Reading from the N-terminus, the 137-residue chain is Transcription antitermination protein NusB (137 aa).

The protein belongs to the NusB family.

In terms of biological role, involved in transcription antitermination. Required for transcription of ribosomal RNA (rRNA) genes. Binds specifically to the boxA antiterminator sequence of the ribosomal RNA (rrn) operons. This chain is Transcription antitermination protein NusB, found in Borreliella afzelii (strain PKo) (Borrelia afzelii).